We begin with the raw amino-acid sequence, 286 residues long: Small ribosomal subunit protein uS3 (286 aa).

One can recognise a KH type-2 domain in the interval 39–107; the sequence is VREYLKKKLA…PVHVNIEEIR (69 aa). The interval 213–286 is disordered; sequence QAGAGTAAPQ…KPGVNDAAAS (74 aa). The span at 241-262 shows a compositional bias: basic and acidic residues; it reads GRADARSDGKAGEKKGPRKSDN.

Belongs to the universal ribosomal protein uS3 family. As to quaternary structure, part of the 30S ribosomal subunit. Forms a tight complex with proteins S10 and S14.

Binds the lower part of the 30S subunit head. Binds mRNA in the 70S ribosome, positioning it for translation. This is Small ribosomal subunit protein uS3 from Nitrosospira multiformis (strain ATCC 25196 / NCIMB 11849 / C 71).